The following is a 73-amino-acid chain: MAKKDGVIEIEGGVVEALPNAMFRVELSNGHKVLAHISGKMRQHYIRILPEDRVIVELSPYDLTRGRIVYRYK.

The S1-like domain occupies 1 to 73; sequence MAKKDGVIEI…TRGRIVYRYK (73 aa).

The protein belongs to the IF-1 family. Component of the 30S ribosomal translation pre-initiation complex which assembles on the 30S ribosome in the order IF-2 and IF-3, IF-1 and N-formylmethionyl-tRNA(fMet); mRNA recruitment can occur at any time during PIC assembly.

Its subcellular location is the cytoplasm. Its function is as follows. One of the essential components for the initiation of protein synthesis. Stabilizes the binding of IF-2 and IF-3 on the 30S subunit to which N-formylmethionyl-tRNA(fMet) subsequently binds. Helps modulate mRNA selection, yielding the 30S pre-initiation complex (PIC). Upon addition of the 50S ribosomal subunit IF-1, IF-2 and IF-3 are released leaving the mature 70S translation initiation complex. This Clavibacter michiganensis subsp. michiganensis (strain NCPPB 382) protein is Translation initiation factor IF-1.